The primary structure comprises 148 residues: MQKSSMLKKEVAIARRQWYLVDATDLVLGRLSVKVADILRGKNKVDYTPNVDAGDYVVVINSDKVVLTGQKALRENWYNHSHYIGGLRTRSGEEMISKYSDELIRRSVKGMLPKNKLAKQILNKLFIYKNDKHPHEAQQPTILELKLK.

It belongs to the universal ribosomal protein uL13 family. In terms of assembly, part of the 50S ribosomal subunit.

Functionally, this protein is one of the early assembly proteins of the 50S ribosomal subunit, although it is not seen to bind rRNA by itself. It is important during the early stages of 50S assembly. This Ureaplasma parvum serovar 3 (strain ATCC 27815 / 27 / NCTC 11736) protein is Large ribosomal subunit protein uL13.